We begin with the raw amino-acid sequence, 775 residues long: Kojibiose phosphorylase (775 aa).

361-362 (WD) serves as a coordination point for substrate. Glu-501 acts as the Proton donor in catalysis. Residue 614–615 (KQ) coordinates substrate.

It belongs to the glycosyl hydrolase 65 family. Homohexamer.

The catalysed reaction is kojibiose + phosphate = beta-D-glucose 1-phosphate + D-glucose. With respect to regulation, inhibited by Hg(2+) and Pb(2+). Functionally, catalyzes the reversible phosphorolysis of kojibiose into beta-D-glucose 1-phosphate (Glc1P) and D-glucose. Can act with alpha-1,2-oligoglucans, such as selaginose, but more slowly. Inactive when disaccharides with linkages other than alpha-1,2 linkages, such as sophorose, trehalose, neotrehalose, nigerose, laminaribiose, maltose, cellobiose, isomaltose, gentiobiose, sucrose and lactose, are used as substrates. In contrast, shows broad specificity for the reverse reaction. Various monosaccharides and disaccharides having a glucosyl residue at the non-reducing end are effective acceptors. This chain is Kojibiose phosphorylase, found in Thermoanaerobacter brockii (Thermoanaerobium brockii).